Consider the following 89-residue polypeptide: Small ribosomal subunit protein bS16 (89 aa).

It belongs to the bacterial ribosomal protein bS16 family.

The chain is Small ribosomal subunit protein bS16 from Chloroflexus aurantiacus (strain ATCC 29364 / DSM 637 / Y-400-fl).